A 615-amino-acid chain; its full sequence is tRNA uridine 5-carboxymethylaminomethyl modification enzyme MnmG (615 aa).

11–16 lines the FAD pocket; sequence GLGHAG. 278 to 292 provides a ligand contact to NAD(+); sequence GPRYCPSLEDKVVRF.

The protein belongs to the MnmG family. As to quaternary structure, homodimer. Heterotetramer of two MnmE and two MnmG subunits. The cofactor is FAD.

It localises to the cytoplasm. In terms of biological role, NAD-binding protein involved in the addition of a carboxymethylaminomethyl (cmnm) group at the wobble position (U34) of certain tRNAs, forming tRNA-cmnm(5)s(2)U34. This is tRNA uridine 5-carboxymethylaminomethyl modification enzyme MnmG from Myxococcus xanthus (strain DK1622).